The following is an 82-amino-acid chain: Small, acid-soluble spore protein gamma-type (82 aa).

Composition is skewed to polar residues over residues 1–24 (MANSNNKTNAQQVRKQNQQSASGQ) and 32–50 (ASETNVQQVRKQNQQSAAG). A disordered region spans residues 1 to 82 (MANSNNKTNA…SAEQNKQQNS (82 aa)). Repeats lie at residues 19–45 (QSASGQGQFGTEFASETNVQQVRKQNQ) and 46–72 (QSAAGQGQFGTEFASETDAQQVRQQNQ). A compositionally biased stretch (low complexity) spans 69-82 (QQNQSAEQNKQQNS).

The protein belongs to the gamma-type SASP family.

In terms of biological role, SASP are bound to spore DNA. They are double-stranded DNA-binding proteins that cause DNA to change to an a-like conformation. They protect the DNA backbone from chemical and enzymatic cleavage and are thus involved in dormant spore's high resistance to UV light. The polypeptide is Small, acid-soluble spore protein gamma-type (Bacillus subtilis).